Here is a 258-residue protein sequence, read N- to C-terminus: Protein SseB (258 aa).

May be involved in the enhancement of serine-sensitivity. This is Protein SseB (sseB) from Escherichia coli (strain K12).